The following is a 407-amino-acid chain: MKKVIILGSTGSIGTQTLEVISSRRDQFEVAGISAGGSDVGSLAQQIIDFSIPVVAVAREDAAEELQRALAVQAGSRGRIVPNPRILTGPDASTELAAMPADVVCNAITGAAGLRPTLATLAAGTTLALANKESLVIGGRLVTQAAASGQIVPVDSEHSAFAQCLRGGGRNEVRRLVLTASGGPFRGRDRASLADVSAAEAMKHPTWNMGRVITINSSTLVNKGLELLEAALLYDVDLDDITVVVHPQSIVHSMVEFWDGATIAQASPPDMRLPIALGLSWPDRLPDAAAGCDWSTATQWTFEPLDNDTFGAVELARRAGHAAGTAPAVFNAANESCVDAFCAGSIGFLDITDTIAAVLDEHLSGDENDTLGARHVGDEALTLDAVLAADAWGRRRAAEVCARGIRR.

NADPH contacts are provided by T10, G11, S12, I13, G36, and N131. A 1-deoxy-D-xylulose 5-phosphate-binding site is contributed by K132. An NADPH-binding site is contributed by E133. Residue D155 coordinates Mn(2+). Positions 156, 157, 181, and 204 each coordinate 1-deoxy-D-xylulose 5-phosphate. E157 is a Mn(2+) binding site. G210 lines the NADPH pocket. 4 residues coordinate 1-deoxy-D-xylulose 5-phosphate: S217, N222, K223, and E226. E226 is a Mn(2+) binding site.

The protein belongs to the DXR family. The cofactor is Mg(2+). It depends on Mn(2+) as a cofactor.

It carries out the reaction 2-C-methyl-D-erythritol 4-phosphate + NADP(+) = 1-deoxy-D-xylulose 5-phosphate + NADPH + H(+). The protein operates within isoprenoid biosynthesis; isopentenyl diphosphate biosynthesis via DXP pathway; isopentenyl diphosphate from 1-deoxy-D-xylulose 5-phosphate: step 1/6. In terms of biological role, catalyzes the NADPH-dependent rearrangement and reduction of 1-deoxy-D-xylulose-5-phosphate (DXP) to 2-C-methyl-D-erythritol 4-phosphate (MEP). The chain is 1-deoxy-D-xylulose 5-phosphate reductoisomerase from Cutibacterium acnes (strain DSM 16379 / KPA171202) (Propionibacterium acnes).